Here is a 449-residue protein sequence, read N- to C-terminus: tRNA-2-methylthio-N(6)-dimethylallyladenosine synthase (449 aa).

The 116-residue stretch at 4 to 119 folds into the MTTase N-terminal domain; the sequence is RTFHIETFGC…APQALDRLVE (116 aa). Cys-13, Cys-48, Cys-82, Cys-158, Cys-162, and Cys-165 together coordinate [4Fe-4S] cluster. One can recognise a Radical SAM core domain in the interval 144-375; the sequence is GAVPASVFVN…QTLQNRLTER (232 aa). A TRAM domain is found at 378–446; the sequence is QDMVGRKVEV…KHSLLAEQAG (69 aa).

This sequence belongs to the methylthiotransferase family. MiaB subfamily. As to quaternary structure, monomer. The cofactor is [4Fe-4S] cluster.

The protein resides in the cytoplasm. It catalyses the reaction N(6)-dimethylallyladenosine(37) in tRNA + (sulfur carrier)-SH + AH2 + 2 S-adenosyl-L-methionine = 2-methylsulfanyl-N(6)-dimethylallyladenosine(37) in tRNA + (sulfur carrier)-H + 5'-deoxyadenosine + L-methionine + A + S-adenosyl-L-homocysteine + 2 H(+). Its function is as follows. Catalyzes the methylthiolation of N6-(dimethylallyl)adenosine (i(6)A), leading to the formation of 2-methylthio-N6-(dimethylallyl)adenosine (ms(2)i(6)A) at position 37 in tRNAs that read codons beginning with uridine. The protein is tRNA-2-methylthio-N(6)-dimethylallyladenosine synthase of Nitratidesulfovibrio vulgaris (strain ATCC 29579 / DSM 644 / CCUG 34227 / NCIMB 8303 / VKM B-1760 / Hildenborough) (Desulfovibrio vulgaris).